Here is a 203-residue protein sequence, read N- to C-terminus: Putative 3-methyladenine DNA glycosylase (203 aa).

The protein belongs to the DNA glycosylase MPG family.

This is Putative 3-methyladenine DNA glycosylase from Clostridium botulinum (strain Langeland / NCTC 10281 / Type F).